Here is a 252-residue protein sequence, read N- to C-terminus: MSHQPYFADNHPMTSTLNADPAELAKFSDLAHRWWDLEGEFRPLHQINPLRLEWINHLCPVAGQQVLDVGCGGGILADSMARLGAQVTGIDLASKALRVAQLHALEAQTPNLQYQEISVEALAAQQPGSFDVVTCMEMLEHVPDPASVVRACATLVKPGGWVFFSTLNRSPKSFVLAIVGAEYVLNLLPRGTHEYAKMIRPSELASYCRSVELDLRHTRGMQYNPLTRRYWMSDDTSVNYLFATQKSNAAIL.

S-adenosyl-L-methionine is bound by residues Arg-51, Gly-70, Asp-91, and Met-136.

Belongs to the methyltransferase superfamily. UbiG/COQ3 family.

It carries out the reaction a 3-demethylubiquinol + S-adenosyl-L-methionine = a ubiquinol + S-adenosyl-L-homocysteine + H(+). It catalyses the reaction a 3-(all-trans-polyprenyl)benzene-1,2-diol + S-adenosyl-L-methionine = a 2-methoxy-6-(all-trans-polyprenyl)phenol + S-adenosyl-L-homocysteine + H(+). It participates in cofactor biosynthesis; ubiquinone biosynthesis. Its function is as follows. O-methyltransferase that catalyzes the 2 O-methylation steps in the ubiquinone biosynthetic pathway. In Albidiferax ferrireducens (strain ATCC BAA-621 / DSM 15236 / T118) (Rhodoferax ferrireducens), this protein is Ubiquinone biosynthesis O-methyltransferase.